The chain runs to 252 residues: HTH-type transcriptional regulator XynR (252 aa).

One can recognise an HTH iclR-type domain in the interval 4–66 (IQSVERALQI…PENGKYRLGM (63 aa)). Positions 25 to 45 (KITDISKLMGLSKSTLHSLLK) form a DNA-binding region, H-T-H motif. An IclR-ED domain is found at 81–250 (IRQKAKGWLT…GLALSRALGY (170 aa)).

Its activity is regulated as follows. Activity may be controlled by xylonate. Involved in regulation of xylonate catabolism. Represses the expression of both yagA and yagEF operons. Binds mainly at a single site within the spacer of the bidirectional transcription units yagA and yagEF. The polypeptide is HTH-type transcriptional regulator XynR (Escherichia coli (strain K12)).